Consider the following 344-residue polypeptide: Glycerol-3-phosphate dehydrogenase [NAD(P)+] (344 aa).

Positions 18, 38, and 115 each coordinate NADPH. Positions 115, 144, and 146 each coordinate sn-glycerol 3-phosphate. NADPH is bound at residue Ala-148. Sn-glycerol 3-phosphate contacts are provided by Lys-199, Asp-252, Ser-262, Arg-263, and Asn-264. The active-site Proton acceptor is the Lys-199. Arg-263 serves as a coordination point for NADPH. NADPH-binding residues include Val-288 and Glu-290.

The protein belongs to the NAD-dependent glycerol-3-phosphate dehydrogenase family.

It is found in the cytoplasm. The enzyme catalyses sn-glycerol 3-phosphate + NAD(+) = dihydroxyacetone phosphate + NADH + H(+). It catalyses the reaction sn-glycerol 3-phosphate + NADP(+) = dihydroxyacetone phosphate + NADPH + H(+). It participates in membrane lipid metabolism; glycerophospholipid metabolism. Its function is as follows. Catalyzes the reduction of the glycolytic intermediate dihydroxyacetone phosphate (DHAP) to sn-glycerol 3-phosphate (G3P), the key precursor for phospholipid synthesis. This chain is Glycerol-3-phosphate dehydrogenase [NAD(P)+], found in Hydrogenovibrio crunogenus (strain DSM 25203 / XCL-2) (Thiomicrospira crunogena).